The chain runs to 430 residues: Small ribosomal subunit protein uS5m (430 aa).

One can recognise an S5 DRBM domain in the interval 218 to 282 (FDTRILEVRN…NRAVHHLHYI (65 aa)).

Belongs to the universal ribosomal protein uS5 family. In terms of assembly, component of the mitochondrial small ribosomal subunit (mt-SSU). Mature mammalian 55S mitochondrial ribosomes consist of a small (28S) and a large (39S) subunit. The 28S small subunit contains a 12S ribosomal RNA (12S mt-rRNA) and 30 different proteins. The 39S large subunit contains a 16S rRNA (16S mt-rRNA), a copy of mitochondrial valine transfer RNA (mt-tRNA(Val)), which plays an integral structural role, and 52 different proteins.

It is found in the mitochondrion. This chain is Small ribosomal subunit protein uS5m (MRPS5), found in Homo sapiens (Human).